The following is a 1042-amino-acid chain: Putative type I restriction enzyme MjaIXP endonuclease subunit (1042 aa).

The Helicase ATP-binding domain occupies 323-487 (GETPEDRRIG…FLVFGDYISA (165 aa)). The short motif at 439-442 (DEAH) is the DEAH box element. The Helicase C-terminal domain maps to 551-731 (LTEDYLSKVS…DIKVVIEEMK (181 aa)).

It belongs to the HsdR family. The type I restriction/modification system is composed of three polypeptides R, M and S.

It carries out the reaction Endonucleolytic cleavage of DNA to give random double-stranded fragments with terminal 5'-phosphates, ATP is simultaneously hydrolyzed.. Its function is as follows. The restriction (R) subunit of a type I restriction enzyme that recognizes 5'-CCAN(5)GTR-3' and cleaves a random distance away. The R subunit is required for both nuclease and ATPase activities, but not for modification. After locating a non-methylated recognition site, the enzyme complex serves as a molecular motor that translocates DNA in an ATP-dependent manner until a collision occurs that triggers cleavage. This is Putative type I restriction enzyme MjaIXP endonuclease subunit from Methanocaldococcus jannaschii (strain ATCC 43067 / DSM 2661 / JAL-1 / JCM 10045 / NBRC 100440) (Methanococcus jannaschii).